The primary structure comprises 158 residues: Protein Smg homolog (158 aa).

This sequence belongs to the Smg family.

This is Protein Smg homolog from Herminiimonas arsenicoxydans.